The sequence spans 330 residues: Ketol-acid reductoisomerase (NADP(+)) (330 aa).

Residues 2–182 (VKIFYDKDVT…GLTKVGVIQT (181 aa)) form the KARI N-terminal Rossmann domain. Residues 25–28 (YGSQ), arginine 48, serine 53, and 83–86 (DEVQ) contribute to the NADP(+) site. Histidine 108 is an active-site residue. NADP(+) is bound at residue glycine 134. One can recognise a KARI C-terminal knotted domain in the interval 183–328 (TFREETETDL…KELRKMCGLE (146 aa)). Residues aspartate 191, glutamate 195, glutamate 227, and glutamate 231 each coordinate Mg(2+). Serine 252 serves as a coordination point for substrate.

The protein belongs to the ketol-acid reductoisomerase family. Requires Mg(2+) as cofactor.

It catalyses the reaction (2R)-2,3-dihydroxy-3-methylbutanoate + NADP(+) = (2S)-2-acetolactate + NADPH + H(+). The enzyme catalyses (2R,3R)-2,3-dihydroxy-3-methylpentanoate + NADP(+) = (S)-2-ethyl-2-hydroxy-3-oxobutanoate + NADPH + H(+). It functions in the pathway amino-acid biosynthesis; L-isoleucine biosynthesis; L-isoleucine from 2-oxobutanoate: step 2/4. It participates in amino-acid biosynthesis; L-valine biosynthesis; L-valine from pyruvate: step 2/4. Functionally, involved in the biosynthesis of branched-chain amino acids (BCAA). Catalyzes an alkyl-migration followed by a ketol-acid reduction of (S)-2-acetolactate (S2AL) to yield (R)-2,3-dihydroxy-isovalerate. In the isomerase reaction, S2AL is rearranged via a Mg-dependent methyl migration to produce 3-hydroxy-3-methyl-2-ketobutyrate (HMKB). In the reductase reaction, this 2-ketoacid undergoes a metal-dependent reduction by NADPH to yield (R)-2,3-dihydroxy-isovalerate. The sequence is that of Ketol-acid reductoisomerase (NADP(+)) from Methanocaldococcus jannaschii (strain ATCC 43067 / DSM 2661 / JAL-1 / JCM 10045 / NBRC 100440) (Methanococcus jannaschii).